The chain runs to 931 residues: Dual serine/threonine and tyrosine protein kinase (931 aa).

A disordered region spans residues M1–G24. A coiled-coil region spans residues R397–E424. The 255-residue stretch at P654–L908 folds into the Protein kinase domain. Residues L660 to V668 and K683 each bind ATP. The active-site Proton acceptor is D779.

It belongs to the protein kinase superfamily. Ser/Thr protein kinase family.

Its subcellular location is the cytoplasm. The protein resides in the cell membrane. It localises to the apical cell membrane. The protein localises to the basolateral cell membrane. It is found in the cell junction. The enzyme catalyses L-seryl-[protein] + ATP = O-phospho-L-seryl-[protein] + ADP + H(+). The catalysed reaction is L-threonyl-[protein] + ATP = O-phospho-L-threonyl-[protein] + ADP + H(+). It catalyses the reaction L-tyrosyl-[protein] + ATP = O-phospho-L-tyrosyl-[protein] + ADP + H(+). Its function is as follows. Acts as a positive regulator of ERK phosphorylation downstream of fibroblast growth factor-receptor activation. Involved in the regulation of both caspase-dependent apoptosis and caspase-independent cell death. In the skin, it plays a predominant role in suppressing caspase-dependent apoptosis in response to UV stress in a range of dermal cell types. In Canis lupus familiaris (Dog), this protein is Dual serine/threonine and tyrosine protein kinase (DSTYK).